A 152-amino-acid chain; its full sequence is Lipoprotein signal peptidase (152 aa).

A run of 2 helical transmembrane segments spans residues 55–75 (NKMWFFYIITVVFVAFIVFYM) and 85–105 (LGISLGLILGGAIGNFIDRVF). Catalysis depends on residues aspartate 111 and aspartate 129. The chain crosses the membrane as a helical span at residues 124–144 (VFNIADSALCIGVVLIIIQTL).

The protein belongs to the peptidase A8 family.

Its subcellular location is the cell membrane. The enzyme catalyses Release of signal peptides from bacterial membrane prolipoproteins. Hydrolyzes -Xaa-Yaa-Zaa-|-(S,diacylglyceryl)Cys-, in which Xaa is hydrophobic (preferably Leu), and Yaa (Ala or Ser) and Zaa (Gly or Ala) have small, neutral side chains.. It functions in the pathway protein modification; lipoprotein biosynthesis (signal peptide cleavage). This protein specifically catalyzes the removal of signal peptides from prolipoproteins. This Bacillus cereus (strain AH187) protein is Lipoprotein signal peptidase.